Here is a 576-residue protein sequence, read N- to C-terminus: Beta-bisabolene synthase (576 aa).

(2E,6E)-farnesyl diphosphate-binding residues include Arg-286, Asp-323, Asp-327, Arg-466, and Asn-469. Positions 323 and 327 each coordinate Mg(2+). Positions 323–327 match the DDXXD motif motif; sequence DDVYD. Asn-469, Thr-473, and Glu-477 together coordinate Mg(2+).

This sequence belongs to the terpene synthase family. Tpsb subfamily. The cofactor is Mg(2+). Requires Mn(2+) as cofactor.

Its function is as follows. Produces almost exclusively beta-bisabolene and only traces of alpha-bisabolol from (2E,6E)-farnesyl diphosphate in fragrance biosynthesis. The chain is Beta-bisabolene synthase from Santalum austrocaledonicum (Sandalwood).